The primary structure comprises 646 residues: MATESGSDSQLRRRRRRDPEGSEKTELSEREPALAVAGSEENDDENEERWVGPLPVEATLAKKRKVLEFERVYLDNLPSASMYERSYMHRDVITHVVCTKTDFIITASHDGHVKFWKKIEEGIEFVKHFRSHLGVIESIAVSSEGALFCSVGDDKAMKVFDVVNFDMINMLKLGYFPGQCEWIYCPGDAISSVAASEKSTGKIFIYDGRGDNQPLHIFDKLHVSPLTQIRLNPVYKAVVSSDKSGMIEYWTGPPHEYKFPKNVNWEYKTDTDLYEFAKCKAYPTSICFSPDGKKIATIGSDRKVRIFRFLTGKLMRVFDESLSMFTELQQMRQQLPDMEFGRRMAVERELEKVDAVRLVNIVFDETGHFVLYGTMLGIKVINVETNRCVRILGKQENIRVMQLALFQGIAKKHRAAATIEMKASENPVLQNIQADPTIVCTSFKKNRFYMFTKREPEDTKTADSDRDVFNEKPSKEEVMAATQAEGPKRVSDSAIVHTSMGDIHIKLFPVECPKTVENFCVHSRNGYYNGHTFHRIIKGFMIQTGDPTGTGMGGESIWGGEFEDEFHSTLRHDRPYTLSMANAGSNTNGSQFFITVVPTPWLDNKHTVFGRVTKGMEVVQRISNVKVNPKTDKPYEDVSIINITVK.

The disordered stretch occupies residues 1 to 50; it reads MATESGSDSQLRRRRRRDPEGSEKTELSEREPALAVAGSEENDDENEERW. Residue Ala-2 is modified to N-acetylalanine. Basic and acidic residues predominate over residues 17 to 32; the sequence is RDPEGSEKTELSEREP. 4 WD repeats span residues 88–126, 131–170, 221–260, and 278–319; these read MHRD…IEFV, SHLG…MINM, LHVS…YKFP, and KCKA…RVFD. The 156-residue stretch at 490–645 folds into the PPIase cyclophilin-type domain; sequence VSDSAIVHTS…EDVSIINITV (156 aa).

The protein belongs to the cyclophilin-type PPIase family. PPIL1 subfamily. As to quaternary structure, identified in the spliceosome C complex.

Its subcellular location is the nucleus. It catalyses the reaction [protein]-peptidylproline (omega=180) = [protein]-peptidylproline (omega=0). With respect to regulation, inhibited by cyclosporin A (CsA). In terms of biological role, PPIase that catalyzes the cis-trans isomerization of proline imidic peptide bonds in oligopeptides and may therefore assist protein folding. May be involved in pre-mRNA splicing. This chain is Peptidylprolyl isomerase domain and WD repeat-containing protein 1, found in Mus musculus (Mouse).